A 507-amino-acid polypeptide reads, in one-letter code: ATP synthase subunit alpha (507 aa).

170–177 (GDRKTGKT) serves as a coordination point for ATP.

The protein belongs to the ATPase alpha/beta chains family. In terms of assembly, F-type ATPases have 2 components, CF(1) - the catalytic core - and CF(0) - the membrane proton channel. CF(1) has five subunits: alpha(3), beta(3), gamma(1), delta(1), epsilon(1). CF(0) has three main subunits: a(1), b(2) and c(9-12). The alpha and beta chains form an alternating ring which encloses part of the gamma chain. CF(1) is attached to CF(0) by a central stalk formed by the gamma and epsilon chains, while a peripheral stalk is formed by the delta and b chains.

It localises to the cell inner membrane. The enzyme catalyses ATP + H2O + 4 H(+)(in) = ADP + phosphate + 5 H(+)(out). Functionally, produces ATP from ADP in the presence of a proton gradient across the membrane. The alpha chain is a regulatory subunit. The sequence is that of ATP synthase subunit alpha from Anaplasma marginale (strain Florida).